We begin with the raw amino-acid sequence, 353 residues long: MTAILERRESTSLWARFCEWITSTENRIYIGWFGVIMIPTLLTATSVFIIAFIAAPPVDIDGIREPVSGSLLYGNNIISGAVIPTSNAIGLHFYPIWEAASLDEWLYNGGPYQLIVCHFFIGICCYMGREWELSFRLGMRPWIAVAYSAPVAAATAVFIIYPIGQGSFSDGMPLGISGTFNFMIVFQAEHNILMHPFHMLGVAGVFGGSLFSAMHGSLVTSSLIRETTENESANAGYRFGQEEETYNIVAAHGYFGRLIFQYASFNNSRSLHFFLAAWPVIGIWFTALGLSTMAFNLNGLNFNQSVVDSNGRVLNTWADIINRANLGMEVMHERNAHNFPLDLAAFEAPSINA.

Thr-2 is modified (N-acetylthreonine). Thr-2 carries the post-translational modification Phosphothreonine. Transmembrane regions (helical) follow at residues 29–46 (YIGW…TATS), 118–133 (HFFI…EWEL), and 142–156 (WIAV…AATA). His-118 lines the chlorophyll a pocket. Residue Tyr-126 participates in pheophytin a binding. Residues Asp-170 and Glu-189 each contribute to the [CaMn4O5] cluster site. The chain crosses the membrane as a helical span at residues 197–218 (FHMLGVAGVFGGSLFSAMHGSL). Chlorophyll a is bound at residue His-198. Residues His-215 and 264–265 (SF) each bind a quinone. His-215 contacts Fe cation. His-272 contacts Fe cation. A helical membrane pass occupies residues 274–288 (FLAAWPVIGIWFTAL). His-332, Glu-333, Asp-342, and Ala-344 together coordinate [CaMn4O5] cluster. Positions 345–353 (AFEAPSINA) are excised as a propeptide.

Belongs to the reaction center PufL/M/PsbA/D family. In terms of assembly, PSII is composed of 1 copy each of membrane proteins PsbA, PsbB, PsbC, PsbD, PsbE, PsbF, PsbH, PsbI, PsbJ, PsbK, PsbL, PsbM, PsbT, PsbX, PsbY, PsbZ, Psb30/Ycf12, at least 3 peripheral proteins of the oxygen-evolving complex and a large number of cofactors. It forms dimeric complexes. The D1/D2 heterodimer binds P680, chlorophylls that are the primary electron donor of PSII, and subsequent electron acceptors. It shares a non-heme iron and each subunit binds pheophytin, quinone, additional chlorophylls, carotenoids and lipids. D1 provides most of the ligands for the Mn4-Ca-O5 cluster of the oxygen-evolving complex (OEC). There is also a Cl(-1) ion associated with D1 and D2, which is required for oxygen evolution. The PSII complex binds additional chlorophylls, carotenoids and specific lipids. is required as a cofactor. In terms of processing, tyr-161 forms a radical intermediate that is referred to as redox-active TyrZ, YZ or Y-Z. Post-translationally, C-terminally processed by CTPA; processing is essential to allow assembly of the oxygen-evolving complex and thus photosynthetic growth.

Its subcellular location is the plastid. The protein localises to the chloroplast thylakoid membrane. The enzyme catalyses 2 a plastoquinone + 4 hnu + 2 H2O = 2 a plastoquinol + O2. In terms of biological role, photosystem II (PSII) is a light-driven water:plastoquinone oxidoreductase that uses light energy to abstract electrons from H(2)O, generating O(2) and a proton gradient subsequently used for ATP formation. It consists of a core antenna complex that captures photons, and an electron transfer chain that converts photonic excitation into a charge separation. The D1/D2 (PsbA/PsbD) reaction center heterodimer binds P680, the primary electron donor of PSII as well as several subsequent electron acceptors. The polypeptide is Photosystem II protein D1 (Chlamydomonas moewusii (Chlamydomonas eugametos)).